Here is a 146-residue protein sequence, read N- to C-terminus: Large ribosomal subunit protein uL11 (146 aa).

This sequence belongs to the universal ribosomal protein uL11 family. Part of the ribosomal stalk of the 50S ribosomal subunit. Interacts with L10 and the large rRNA to form the base of the stalk. L10 forms an elongated spine to which L12 dimers bind in a sequential fashion forming a multimeric L10(L12)X complex. One or more lysine residues are methylated.

In terms of biological role, forms part of the ribosomal stalk which helps the ribosome interact with GTP-bound translation factors. This Blochmanniella floridana protein is Large ribosomal subunit protein uL11.